We begin with the raw amino-acid sequence, 860 residues long: Leucine--tRNA ligase (860 aa).

The 'HIGH' region signature appears at Pro-42–His-52. Residues Lys-619–Ser-623 carry the 'KMSKS' region motif. Lys-622 is an ATP binding site.

Belongs to the class-I aminoacyl-tRNA synthetase family.

It localises to the cytoplasm. It carries out the reaction tRNA(Leu) + L-leucine + ATP = L-leucyl-tRNA(Leu) + AMP + diphosphate. This Pectobacterium carotovorum subsp. carotovorum (strain PC1) protein is Leucine--tRNA ligase.